The primary structure comprises 94 residues: DNA-directed RNA polymerase subunit omega (94 aa).

This sequence belongs to the RNA polymerase subunit omega family. As to quaternary structure, the RNAP catalytic core consists of 2 alpha, 1 beta, 1 beta' and 1 omega subunit. When a sigma factor is associated with the core the holoenzyme is formed, which can initiate transcription.

The enzyme catalyses RNA(n) + a ribonucleoside 5'-triphosphate = RNA(n+1) + diphosphate. Functionally, promotes RNA polymerase assembly. Latches the N- and C-terminal regions of the beta' subunit thereby facilitating its interaction with the beta and alpha subunits. The chain is DNA-directed RNA polymerase subunit omega from Bifidobacterium longum subsp. infantis (strain ATCC 15697 / DSM 20088 / JCM 1222 / NCTC 11817 / S12).